The chain runs to 265 residues: Cell division protein FtsQ (265 aa).

Residues 1 to 13 (MAGATTAKGGARR) show a composition bias toward low complexity. Residues 1 to 25 (MAGATTAKGGARRTPPPGPPPPALK) are disordered. Topologically, residues 1-35 (MAGATTAKGGARRTPPPGPPPPALKARRRLRLPRR) are cytoplasmic. Residues 14–23 (TPPPGPPPPA) are compositionally biased toward pro residues. Residues 36-58 (RTLLVTGVATALLGSGVTWLLYG) traverse the membrane as a helical segment. Over 59–265 (SSWLRVEQVA…APTAPAVTHS (207 aa)) the chain is Extracellular. The POTRA domain occupies 62 to 131 (LRVEQVAVSG…DTIAVRVTER (70 aa)).

Belongs to the FtsQ/DivIB family. FtsQ subfamily.

The protein resides in the cell membrane. Its function is as follows. Essential cell division protein. In Streptomyces bingchenggensis (strain BCW-1), this protein is Cell division protein FtsQ.